Consider the following 642-residue polypeptide: Threonine--tRNA ligase (642 aa).

The TGS domain occupies 1–61 (MPVITLPDGS…ETDSDLSIIT (61 aa)). The catalytic stretch occupies residues 243-534 (DHRKIGKQLD…LIEEYAGKFP (292 aa)). Zn(2+) is bound by residues Cys-334, His-385, and His-511.

It belongs to the class-II aminoacyl-tRNA synthetase family. In terms of assembly, homodimer. Requires Zn(2+) as cofactor.

Its subcellular location is the cytoplasm. The catalysed reaction is tRNA(Thr) + L-threonine + ATP = L-threonyl-tRNA(Thr) + AMP + diphosphate + H(+). Functionally, catalyzes the attachment of threonine to tRNA(Thr) in a two-step reaction: L-threonine is first activated by ATP to form Thr-AMP and then transferred to the acceptor end of tRNA(Thr). Also edits incorrectly charged L-seryl-tRNA(Thr). The sequence is that of Threonine--tRNA ligase from Shewanella pealeana (strain ATCC 700345 / ANG-SQ1).